A 379-amino-acid chain; its full sequence is Ribosomal RNA small subunit methyltransferase H (379 aa).

S-adenosyl-L-methionine-binding positions include 71-73 (GGH), E90, D157, and H164.

It belongs to the methyltransferase superfamily. RsmH family.

Its subcellular location is the cytoplasm. The enzyme catalyses cytidine(1402) in 16S rRNA + S-adenosyl-L-methionine = N(4)-methylcytidine(1402) in 16S rRNA + S-adenosyl-L-homocysteine + H(+). Functionally, specifically methylates the N4 position of cytidine in position 1402 (C1402) of 16S rRNA. The chain is Ribosomal RNA small subunit methyltransferase H from Treponema pallidum (strain Nichols).